The chain runs to 518 residues: U3 small nucleolar RNA-associated protein 15 homolog (518 aa).

Alanine 2 is modified (N-acetylalanine). 7 WD repeats span residues 36–75 (KEFG…PIKT), 78–117 (RFKD…PLRQ), 120–159 (GHTK…EILT), 162–202 (EHSD…SVLS), 204–242 (EHGQ…QLLV), 246–285 (NHHK…VVHS), and 287–326 (DYAA…KKES). Lysine 249 participates in a covalent cross-link: Glycyl lysine isopeptide (Lys-Gly) (interchain with G-Cter in SUMO2).

In terms of assembly, part of the small subunit (SSU) processome, composed of more than 70 proteins and the RNA chaperone small nucleolar RNA (snoRNA) U3. May be a component of the proposed t-UTP subcomplex of the ribosomal small subunit (SSU) processome containing at least UTP4, WDR43, HEATR1, UTP15, WDR75. Interacts directly with UTP4 and WDR43.

Its subcellular location is the nucleus. The protein localises to the nucleolus. Ribosome biogenesis factor. Involved in nucleolar processing of pre-18S ribosomal RNA. Required for optimal pre-ribosomal RNA transcription by RNA polymerase I. Part of the small subunit (SSU) processome, first precursor of the small eukaryotic ribosomal subunit. During the assembly of the SSU processome in the nucleolus, many ribosome biogenesis factors, an RNA chaperone and ribosomal proteins associate with the nascent pre-rRNA and work in concert to generate RNA folding, modifications, rearrangements and cleavage as well as targeted degradation of pre-ribosomal RNA by the RNA exosome. The protein is U3 small nucleolar RNA-associated protein 15 homolog of Homo sapiens (Human).